The following is a 268-amino-acid chain: Ubiquinone biosynthesis protein COQ4 homolog, mitochondrial (268 aa).

The N-terminal 25 residues, 1-25 (MMQRCLRLQKPLALRRGLHLAQVNS), are a transit peptide targeting the mitochondrion. Histidine 171, aspartate 172, histidine 175, and glutamate 187 together coordinate Zn(2+).

The protein belongs to the COQ4 family. In terms of assembly, component of a multi-subunit COQ enzyme complex. Zn(2+) serves as cofactor.

Its subcellular location is the mitochondrion inner membrane. It carries out the reaction a 4-hydroxy-3-methoxy-5-(all-trans-polyprenyl)benzoate + H(+) = a 2-methoxy-6-(all-trans-polyprenyl)phenol + CO2. The protein operates within cofactor biosynthesis; ubiquinone biosynthesis. Functionally, lyase that catalyzes the C1-decarboxylation of 4-hydroxy-3-methoxy-5-(all-trans-polyprenyl)benzoic acid into 2-methoxy-6-(all-trans-polyprenyl)phenol during ubiquinone biosynthesis. The chain is Ubiquinone biosynthesis protein COQ4 homolog, mitochondrial from Drosophila simulans (Fruit fly).